Reading from the N-terminus, the 194-residue chain is Small ribosomal subunit protein uS4c (194 aa).

A disordered region spans residues G13–Q36. Residues M82 to N143 enclose the S4 RNA-binding domain.

This sequence belongs to the universal ribosomal protein uS4 family. Part of the 30S ribosomal subunit. Contacts protein S5. The interaction surface between S4 and S5 is involved in control of translational fidelity.

The protein localises to the plastid. Its subcellular location is the chloroplast. In terms of biological role, one of the primary rRNA binding proteins, it binds directly to 16S rRNA where it nucleates assembly of the body of the 30S subunit. Functionally, with S5 and S12 plays an important role in translational accuracy. The polypeptide is Small ribosomal subunit protein uS4c (rps4) (Moraea spathulata (Large yellow moraea)).